The primary structure comprises 740 residues: Polyribonucleotide nucleotidyltransferase (740 aa).

Positions 492 and 498 each coordinate Mg(2+). The 60-residue stretch at 559–618 folds into the KH domain; it reads PMVQTLEIQKEKIRDVIGLGGKVIKELCKTFDVEIDISENGEVKVWGNVGENVKKAVQSI. Positions 628-696 constitute an S1 motif domain; that stretch reads GDIFDGEVVK…HKNRVKLTLR (69 aa).

Belongs to the polyribonucleotide nucleotidyltransferase family. Requires Mg(2+) as cofactor.

The protein resides in the cytoplasm. It catalyses the reaction RNA(n+1) + phosphate = RNA(n) + a ribonucleoside 5'-diphosphate. In terms of biological role, involved in mRNA degradation. Catalyzes the phosphorolysis of single-stranded polyribonucleotides processively in the 3'- to 5'-direction. The sequence is that of Polyribonucleotide nucleotidyltransferase from Orientia tsutsugamushi (strain Boryong) (Rickettsia tsutsugamushi).